The chain runs to 405 residues: Acetylornithine aminotransferase (405 aa).

Pyridoxal 5'-phosphate-binding positions include G107 to A108 and F140. R143 is a N(2)-acetyl-L-ornithine binding site. D225–Q228 contributes to the pyridoxal 5'-phosphate binding site. K254 is subject to N6-(pyridoxal phosphate)lysine. S282 is a N(2)-acetyl-L-ornithine binding site. Pyridoxal 5'-phosphate is bound at residue T283.

The protein belongs to the class-III pyridoxal-phosphate-dependent aminotransferase family. ArgD subfamily. Homodimer. Pyridoxal 5'-phosphate is required as a cofactor.

It localises to the cytoplasm. It catalyses the reaction N(2)-acetyl-L-ornithine + 2-oxoglutarate = N-acetyl-L-glutamate 5-semialdehyde + L-glutamate. Its pathway is amino-acid biosynthesis; L-arginine biosynthesis; N(2)-acetyl-L-ornithine from L-glutamate: step 4/4. This chain is Acetylornithine aminotransferase, found in Shewanella oneidensis (strain ATCC 700550 / JCM 31522 / CIP 106686 / LMG 19005 / NCIMB 14063 / MR-1).